The primary structure comprises 343 residues: Protein rax1 (343 aa).

Topologically, residues 1–235 (MASAPRVSEV…NLNPLTCTGR (235 aa)) are cytoplasmic. The RGS domain maps to 109-228 (ELSNEQTINS…LNHKFKHNLN (120 aa)). A helical membrane pass occupies residues 236–256 (FIIGYVSTFAAYWLGFCGIFL). Topologically, residues 257-263 (DYSRRKR) are extracellular. The helical transmembrane segment at 264 to 284 (VWTLLPFAFGFYNLICTWSKH) threads the bilayer. At 285-317 (DPVLALLGYSEVKPFHYEKVLQPSIRLSLNRRA) the chain is on the cytoplasmic side. A helical transmembrane segment spans residues 318 to 338 (IFVLSIIVLIVGANTAIFSCV). Residues 339–343 (PSIRL) lie on the Extracellular side of the membrane.

The protein resides in the cell membrane. Its subcellular location is the endoplasmic reticulum membrane. In terms of biological role, may be involved in cell polarization and division. This chain is Protein rax1 (rax1), found in Schizosaccharomyces pombe (strain 972 / ATCC 24843) (Fission yeast).